The following is a 435-amino-acid chain: Probable aminotransferase gliI (435 aa).

Lys-266 is subject to N6-(pyridoxal phosphate)lysine.

This sequence belongs to the class-I pyridoxal-phosphate-dependent aminotransferase family. It depends on pyridoxal 5'-phosphate as a cofactor.

It participates in mycotoxin biosynthesis. In terms of biological role, probable aminotransferase; part of the gene cluster that mediates the biosynthesis of gliotoxin, a member of the epipolythiodioxopiperazine (ETP) class of toxins characterized by a disulfide bridged cyclic dipeptide. The first step in gliotoxin biosynthesis is the condensation of serine and phenylalanine to form the cyclo-L-phenylalanyl-L-serine diketopiperazine (DKP) by the NRPS gliP. GliP is also able to produce the DKP cyclo-L-tryptophanyl-L-serine, suggesting that the substrate specificity of the first adenylation (A) domain in gliP is sufficiently relaxed to accommodate both L-Phe and L-Trp. The cytochrome P450 monooxygenase gliC has been shown to catalyze the subsequent hydroxylation of the alpha-carbon of L-Phe in cyclo-L-phenylalanyl-L-serine whereas the second cytochrome P450 enzyme, gliF, is presumably involved in the modification of the DKP side chain. The glutathione S-transferase (GST) gliG then forms a bis-glutathionylated biosynthetic intermediate which is responsible for the sulfurization of gliotoxin. This bis-glutathionylated intermediate is subsequently processed by the gamma-glutamyl cyclotransferase gliK to remove both gamma-glutamyl moieties. Subsequent processing via gliI yields a biosynthetic intermediate, which is N-methylated via the N-methyltransferase gliN, before the gliotoxin oxidoreductase gliT-mediated disulfide bridge closure. GliN-mediated amide methylation confers stability to ETP, damping the spontaneous formation of tri- and tetrasulfides. Intracellular dithiol gliotoxin oxidized by gliT is subsequently effluxed by gliA. Gliotoxin contributes to pathogenesis during invasive aspergillosis. In macrophages and neutrophils, gliotoxin showed inhibition of various different cell functions including cytokine production, antigen presentation, phagocytosis, and production of reactive oxygen species. The sequence is that of Probable aminotransferase gliI from Aspergillus fumigatus (strain ATCC MYA-4609 / CBS 101355 / FGSC A1100 / Af293) (Neosartorya fumigata).